The sequence spans 194 residues: ECF RNA polymerase sigma factor SigX (194 aa).

Residues 32–45 carry the Polymerase core binding motif; that stretch reads DLLQEVYIRVLNSY. Positions 136-155 form a DNA-binding region, H-T-H motif; sequence IQETAKALRFSESKVKTTQH.

It belongs to the sigma-70 factor family. ECF subfamily. In terms of assembly, interacts transiently with the RNAP core.

Its subcellular location is the cell membrane. Sigma factors are initiation factors that promote the attachment of RNA polymerase (RNAP) to specific initiation sites and are then released. May be involved in the regulation of iron metabolism. Associates with RNAP core during early growth phases, association decreases as cells age. This chain is ECF RNA polymerase sigma factor SigX (sigX), found in Bacillus subtilis (strain 168).